Here is a 900-residue protein sequence, read N- to C-terminus: DNA polymerase nu (900 aa).

Over residues 60 to 75 the composition is skewed to basic and acidic residues; the sequence is LEDRKTQSPEKKDLKS. Disordered stretches follow at residues 60–90 and 863–900; these read LEDRKTQSPEKKDLKSLRSQTSRGSAKLSPQ and GPPPGPCRTESPSNSLAAPGSPASTQPPPLHFSPSFCL. Residues 76-90 are compositionally biased toward polar residues; the sequence is LRSQTSRGSAKLSPQ.

Belongs to the DNA polymerase type-A family. Interacts with FANCD2, FANCI, PCNA, RAD51 and HELQ. In terms of tissue distribution, highly expressed in testis and heart. Weakly expressed in skeletal muscle.

It localises to the nucleus. It carries out the reaction DNA(n) + a 2'-deoxyribonucleoside 5'-triphosphate = DNA(n+1) + diphosphate. Its activity is regulated as follows. Inhibited by ddTTP. Functionally, DNA polymerase with very low fidelity that catalyzes considerable misincorporation by inserting dTTP opposite a G template, and dGTP opposite a T template. Is the least accurate of the DNA polymerase A family (i.e. POLG, POLN and POLQ). Can perform accurate translesion DNA synthesis (TLS) past a 5S-thymine glycol. Can perform efficient strand displacement past a nick or a gap and gives rise to an amount of product similar to that on non-damaged template. Has no exonuclease activity. Error-prone DNA polymerase that preferentially misincorporates dT regardless of template sequence. May play a role in TLS during interstrand cross-link (ICL) repair. May be involved in TLS when genomic replication is blocked by extremely large major groove DNA lesions. May function in the bypass of some DNA-protein and DNA-DNA cross-links. May have a role in cellular tolerance to DNA cross-linking agents. Involved in the repair of DNA cross-links and double-strand break (DSB) resistance. Participates in FANCD2-mediated repair. Forms a complex with HELQ helicase that participates in homologous recombination (HR) repair and is essential for cellular protection against DNA cross-links. The polypeptide is DNA polymerase nu (POLN) (Homo sapiens (Human)).